The following is a 414-amino-acid chain: Argininosuccinate synthase (414 aa).

Position 12 to 20 (12 to 20) interacts with ATP; sequence AYSGGLDTS. Y90 and S95 together coordinate L-citrulline. An ATP-binding site is contributed by G120. L-aspartate is bound by residues T122, N126, and D127. N126 is a binding site for L-citrulline. 5 residues coordinate L-citrulline: R130, S179, S188, E264, and Y276.

This sequence belongs to the argininosuccinate synthase family. Type 1 subfamily. Homotetramer.

It localises to the cytoplasm. It carries out the reaction L-citrulline + L-aspartate + ATP = 2-(N(omega)-L-arginino)succinate + AMP + diphosphate + H(+). It functions in the pathway amino-acid biosynthesis; L-arginine biosynthesis; L-arginine from L-ornithine and carbamoyl phosphate: step 2/3. The sequence is that of Argininosuccinate synthase from Alkaliphilus metalliredigens (strain QYMF).